The primary structure comprises 367 residues: Cellular tumor antigen p53 (367 aa).

Residues 1–47 are transcription activation (acidic); sequence MEEENISLPLSQDTFQDLWDNVSAPPISTIQTAALENEAWPAERQMN. A DNA-binding region spans residues 86 to 273; it reads DYPGEYGFKL…KTEETNSTKM (188 aa). Zn(2+) is bound by residues cysteine 160, histidine 163, cysteine 219, and cysteine 223. An interaction with DNA region spans residues 254-261; the sequence is RVCACPGR. Basic and acidic residues predominate over residues 262–279; it reads DRKTEETNSTKMQNDAKD. 2 disordered regions span residues 262–306 and 332–367; these read DRKT…AEED and DLLE…SDSD. Residues 282–300 carry the Bipartite nuclear localization signal motif; it reads KRKSVPTPDSTTIKKSKTA. Residues 291–302 are compositionally biased toward low complexity; that stretch reads STTIKKSKTASS. The interval 308–337 is oligomerization; that stretch reads NEVYTLQIRGRKRYEMLKKINDGLDLLENK. The Nuclear export signal signature appears at 322–333; the sequence is EMLKKINDGLDL. A basic (repression of DNA-binding) region spans residues 342–363; the sequence is ATHRPDGPIPPSGKRLLHRGEK.

This sequence belongs to the p53 family. Binds DNA as a homotetramer. Zn(2+) is required as a cofactor.

It localises to the cytoplasm. It is found in the nucleus. Its function is as follows. Multifunctional transcription factor that induces cell cycle arrest, DNA repair or apoptosis upon binding to its target DNA sequence. Acts as a tumor suppressor in many tumor types; induces growth arrest or apoptosis depending on the physiological circumstances and cell type. Negatively regulates cell division by controlling expression of a set of genes required for this process. One of the activated genes is an inhibitor of cyclin-dependent kinases. Apoptosis induction seems to be mediated either by stimulation of BAX and FAS antigen expression, or by repression of Bcl-2 expression. In Tetraodon miurus (Congo puffer), this protein is Cellular tumor antigen p53 (tp53).